A 223-amino-acid chain; its full sequence is Sigma non-opioid intracellular receptor 1 (223 aa).

Over 1-7 (MAVLSSR) the chain is Lumenal. Residues 8-29 (AMRAALGLAVLAVVIQLLRTWL) traverse the membrane as a helical segment. Residues 30–223 (SSKSYLFNQK…HTYLSELGLS (194 aa)) are Cytoplasmic-facing. An important for ligand-binding region spans residues 98–105 (SLTEYILL). The interval 176–223 (FIPSTMGFALADTIFSTQDFCTLFYTFRIYARCLLLETHTYLSELGLS) is C-terminal hydrophobic region.

It belongs to the ERG2 family. Homotrimer.

The protein resides in the nucleus inner membrane. Its subcellular location is the nucleus outer membrane. It localises to the nucleus envelope. It is found in the cytoplasmic vesicle. The protein localises to the endoplasmic reticulum membrane. The protein resides in the membrane. In terms of biological role, may function in lipid transport from the endoplasmic reticulum and be involved in a wide array of cellular functions probably through regulation of the biogenesis of lipid microdomains at the plasma membrane. May regulate calcium efflux at the endoplasmic reticulum. The polypeptide is Sigma non-opioid intracellular receptor 1 (SIGMAR1) (Taricha granulosa (Roughskin newt)).